Consider the following 240-residue polypeptide: Sugar fermentation stimulation protein homolog (240 aa).

This sequence belongs to the SfsA family.

This Saccharolobus islandicus (strain M.14.25 / Kamchatka #1) (Sulfolobus islandicus) protein is Sugar fermentation stimulation protein homolog.